The following is a 351-amino-acid chain: MQIASSPFTHNQRSTRRIMLLVILACIPGIIAQTYFFGYGSLIQVMLAMITALLAEGAVLQLRKQPVMARLQDNSALLTALLLGISLPPLAPWWMIVLGTLFAIVIAKQLYGGLGQNPFNPAMVGYVVLLISFPVQMTSWLPPLPLQGTSVGFYDSLLTIFTGYTHSGENIHQLQVGYDGISQATPLDTFKTSLRSQPADQILQQPIFGGVLAGLGWQWVNLGFLVGGLLLLWRKAIHWHIPVSFLLALGGCAAVSWMIAPQSFASPMLHLFSGATMLGAFFIATDPVSASTTPRGRLIFGALIGILVWLIRVYGGYPDGVAFAVLLANITVPLIDHYTQPRVYGHKSGHK.

Transmembrane regions (helical) follow at residues 18–38 (IMLL…YFFG), 40–60 (GSLI…GAVL), 87–107 (LPPL…IVIA), and 121–141 (PAMV…TSWL). Thr185 is modified (FMN phosphoryl threonine). 5 helical membrane passes run 211-231 (VLAG…GLLL), 241-261 (IPVS…MIAP), 264-284 (FASP…FFIA), 298-318 (LIFG…GGYP), and 320-340 (GVAF…HYTQ).

This sequence belongs to the NqrB/RnfD family. The complex is composed of six subunits: RnfA, RnfB, RnfC, RnfD, RnfE and RnfG. Requires FMN as cofactor.

The protein resides in the cell inner membrane. Part of a membrane-bound complex that couples electron transfer with translocation of ions across the membrane. The polypeptide is Ion-translocating oxidoreductase complex subunit D (Yersinia pseudotuberculosis serotype O:1b (strain IP 31758)).